The sequence spans 206 residues: ATP phosphoribosyltransferase (206 aa).

It belongs to the ATP phosphoribosyltransferase family. Short subfamily. As to quaternary structure, heteromultimer composed of HisG and HisZ subunits.

It is found in the cytoplasm. It carries out the reaction 1-(5-phospho-beta-D-ribosyl)-ATP + diphosphate = 5-phospho-alpha-D-ribose 1-diphosphate + ATP. It participates in amino-acid biosynthesis; L-histidine biosynthesis; L-histidine from 5-phospho-alpha-D-ribose 1-diphosphate: step 1/9. Catalyzes the condensation of ATP and 5-phosphoribose 1-diphosphate to form N'-(5'-phosphoribosyl)-ATP (PR-ATP). Has a crucial role in the pathway because the rate of histidine biosynthesis seems to be controlled primarily by regulation of HisG enzymatic activity. The chain is ATP phosphoribosyltransferase from Wolinella succinogenes (strain ATCC 29543 / DSM 1740 / CCUG 13145 / JCM 31913 / LMG 7466 / NCTC 11488 / FDC 602W) (Vibrio succinogenes).